Consider the following 338-residue polypeptide: uncharacterized protein (338 aa).

Residues 144-321 enclose the TNase-like domain; it reads HTLPVDVKAV…RAARVGLWAS (178 aa). Active-site residues include Arg228, Glu236, and Arg270.

This is an uncharacterized protein from Capnoides sempervirens (Rock-harlequin).